The primary structure comprises 298 residues: Lipoyl synthase (298 aa).

The [4Fe-4S] cluster site is built by Cys40, Cys45, Cys51, Cys67, Cys71, Cys74, and Ser280. The Radical SAM core domain occupies 53-269; that stretch reads AVRKTATFMI…KEIALSKGFS (217 aa).

It belongs to the radical SAM superfamily. Lipoyl synthase family. [4Fe-4S] cluster serves as cofactor.

Its subcellular location is the cytoplasm. The enzyme catalyses [[Fe-S] cluster scaffold protein carrying a second [4Fe-4S](2+) cluster] + N(6)-octanoyl-L-lysyl-[protein] + 2 oxidized [2Fe-2S]-[ferredoxin] + 2 S-adenosyl-L-methionine + 4 H(+) = [[Fe-S] cluster scaffold protein] + N(6)-[(R)-dihydrolipoyl]-L-lysyl-[protein] + 4 Fe(3+) + 2 hydrogen sulfide + 2 5'-deoxyadenosine + 2 L-methionine + 2 reduced [2Fe-2S]-[ferredoxin]. The protein operates within protein modification; protein lipoylation via endogenous pathway; protein N(6)-(lipoyl)lysine from octanoyl-[acyl-carrier-protein]. Functionally, catalyzes the radical-mediated insertion of two sulfur atoms into the C-6 and C-8 positions of the octanoyl moiety bound to the lipoyl domains of lipoate-dependent enzymes, thereby converting the octanoylated domains into lipoylated derivatives. In Bacillus cereus (strain B4264), this protein is Lipoyl synthase.